The sequence spans 194 residues: dTTP/UTP pyrophosphatase (194 aa).

Asp-76 serves as the catalytic Proton acceptor.

Belongs to the Maf family. YhdE subfamily. A divalent metal cation is required as a cofactor.

The protein resides in the cytoplasm. It catalyses the reaction dTTP + H2O = dTMP + diphosphate + H(+). The enzyme catalyses UTP + H2O = UMP + diphosphate + H(+). Nucleoside triphosphate pyrophosphatase that hydrolyzes dTTP and UTP. May have a dual role in cell division arrest and in preventing the incorporation of modified nucleotides into cellular nucleic acids. The protein is dTTP/UTP pyrophosphatase of Shewanella sp. (strain MR-7).